Reading from the N-terminus, the 151-residue chain is Acidic phospholipase A2 4 (151 aa).

The first 27 residues, 1 to 27, serve as a signal peptide directing secretion; the sequence is MYPAHLLVLLAVCVSLLGAASIPARPL. Intrachain disulfides connect Cys-38–Cys-104, Cys-54–Cys-151, Cys-56–Cys-72, Cys-71–Cys-132, Cys-78–Cys-125, Cys-88–Cys-118, and Cys-111–Cys-123. Residues Tyr-55, Gly-57, and Gly-59 each contribute to the Ca(2+) site. His-75 is an active-site residue. Residue Asp-76 participates in Ca(2+) binding. Asp-126 is a catalytic residue.

It belongs to the phospholipase A2 family. Group I subfamily. D49 sub-subfamily. Ca(2+) is required as a cofactor. In terms of tissue distribution, expressed by the venom gland.

The protein localises to the secreted. It catalyses the reaction a 1,2-diacyl-sn-glycero-3-phosphocholine + H2O = a 1-acyl-sn-glycero-3-phosphocholine + a fatty acid + H(+). Its function is as follows. PLA2 catalyzes the calcium-dependent hydrolysis of the 2-acyl groups in 3-sn-phosphoglycerides. This Tropidechis carinatus (Australian rough-scaled snake) protein is Acidic phospholipase A2 4.